We begin with the raw amino-acid sequence, 509 residues long: Lanosterol 14-alpha demethylase (509 aa).

Residues 30–50 (GNLLSMLLIACAFTLSLVYLF) traverse the membrane as a helical segment. Residue cysteine 455 coordinates heme.

The protein belongs to the cytochrome P450 family. Requires heme as cofactor. In terms of processing, ubiquitinated by MARCHF6, leading to proteasomal degradation.

The protein resides in the endoplasmic reticulum membrane. Its subcellular location is the microsome membrane. The enzyme catalyses a 14alpha-methyl steroid + 3 reduced [NADPH--hemoprotein reductase] + 3 O2 = a Delta(14) steroid + formate + 3 oxidized [NADPH--hemoprotein reductase] + 4 H2O + 4 H(+). It carries out the reaction lanosterol + 3 reduced [NADPH--hemoprotein reductase] + 3 O2 = 4,4-dimethyl-5alpha-cholesta-8,14,24-trien-3beta-ol + formate + 3 oxidized [NADPH--hemoprotein reductase] + 4 H2O + 4 H(+). The catalysed reaction is 24,25-dihydrolanosterol + 3 reduced [NADPH--hemoprotein reductase] + 3 O2 = 4,4-dimethyl-8,14-cholestadien-3beta-ol + formate + 3 oxidized [NADPH--hemoprotein reductase] + 4 H2O + 4 H(+). It catalyses the reaction a 14alpha-methyl steroid + reduced [NADPH--hemoprotein reductase] + O2 = a 14alpha-hydroxymethyl steroid + oxidized [NADPH--hemoprotein reductase] + H2O + H(+). The enzyme catalyses a 14alpha-hydroxymethyl steroid + reduced [NADPH--hemoprotein reductase] + O2 = a 14alpha-formyl steroid + oxidized [NADPH--hemoprotein reductase] + 2 H2O + H(+). It carries out the reaction a 14alpha-formyl steroid + reduced [NADPH--hemoprotein reductase] + O2 = a Delta(14) steroid + formate + oxidized [NADPH--hemoprotein reductase] + H2O + 2 H(+). The catalysed reaction is lanosterol + reduced [NADPH--hemoprotein reductase] + O2 = 32-hydroxylanosterol + oxidized [NADPH--hemoprotein reductase] + H2O + H(+). It catalyses the reaction 32-hydroxylanosterol + reduced [NADPH--hemoprotein reductase] + O2 = 32-oxolanosterol + oxidized [NADPH--hemoprotein reductase] + 2 H2O + H(+). The enzyme catalyses 32-oxolanosterol + reduced [NADPH--hemoprotein reductase] + O2 = 4,4-dimethyl-5alpha-cholesta-8,14,24-trien-3beta-ol + formate + oxidized [NADPH--hemoprotein reductase] + H2O + 2 H(+). It carries out the reaction 24,25-dihydrolanosterol + reduced [NADPH--hemoprotein reductase] + O2 = 32-hydroxy-24,25-dihydrolanosterol + oxidized [NADPH--hemoprotein reductase] + H2O + H(+). The catalysed reaction is 32-hydroxy-24,25-dihydrolanosterol + reduced [NADPH--hemoprotein reductase] + O2 = 32-oxo-24,25-dihydrolanosterol + oxidized [NADPH--hemoprotein reductase] + 2 H2O + H(+). It catalyses the reaction 32-oxo-24,25-dihydrolanosterol + reduced [NADPH--hemoprotein reductase] + O2 = 4,4-dimethyl-8,14-cholestadien-3beta-ol + formate + oxidized [NADPH--hemoprotein reductase] + H2O + 2 H(+). Its pathway is steroid biosynthesis; zymosterol biosynthesis; zymosterol from lanosterol: step 1/6. Inhibited by azalanstat. Inhibited by azole antifungal agents ketoconazole, itraconazole and fluconazole. Functionally, sterol 14alpha-demethylase that plays a critical role in the cholesterol biosynthesis pathway, being cholesterol the major sterol component in mammalian membranes as well as a precursor for bile acid and steroid hormone synthesis. Cytochrome P450 monooxygenase that catalyzes the three-step oxidative removal of the 14alpha-methyl group (C-32) of sterols such as lanosterol (lanosta-8,24-dien-3beta-ol) and 24,25-dihydrolanosterol (DHL) in the form of formate, and converts the sterols to 4,4-dimethyl-5alpha-cholesta-8,14,24-trien-3beta-ol and 4,4-dimethyl-8,14-cholestadien-3beta-ol, respectively, which are intermediates of cholesterol biosynthesis. Can also demethylate substrates not intrinsic to mammals, such as eburicol (24-methylene-24,25-dihydrolanosterol), but at a lower rate than DHL. This is Lanosterol 14-alpha demethylase from Macaca fascicularis (Crab-eating macaque).